The following is a 566-amino-acid chain: O-fucosyltransferase 36 (566 aa).

The segment covering 1–14 has biased composition (basic and acidic residues); it reads MERNSSDDEEDHQH. The tract at residues 1–37 is disordered; sequence MERNSSDDEEDHQHLIPQNDTRIRHREDSVSSNATTI. The chain crosses the membrane as a helical; Signal-anchor for type II membrane protein span at residues 66 to 86; that stretch reads YVIVFVSLIISIGLLFLLTDP. N-linked (GlcNAc...) asparagine glycans are attached at residues N93, N129, N138, N179, and N190. Substrate-binding positions include 415–417 and 531–532; these read HFR and TF.

Belongs to the glycosyltransferase GT106 family.

The protein localises to the membrane. It participates in glycan metabolism. The sequence is that of O-fucosyltransferase 36 from Arabidopsis thaliana (Mouse-ear cress).